Here is a 292-residue protein sequence, read N- to C-terminus: Ribosomal protein L11 methyltransferase (292 aa).

Positions 144, 165, 187, and 229 each coordinate S-adenosyl-L-methionine.

This sequence belongs to the methyltransferase superfamily. PrmA family.

It localises to the cytoplasm. It carries out the reaction L-lysyl-[protein] + 3 S-adenosyl-L-methionine = N(6),N(6),N(6)-trimethyl-L-lysyl-[protein] + 3 S-adenosyl-L-homocysteine + 3 H(+). Functionally, methylates ribosomal protein L11. The sequence is that of Ribosomal protein L11 methyltransferase from Pseudomonas fluorescens (strain SBW25).